Here is a 101-residue protein sequence, read N- to C-terminus: Small ribosomal subunit protein uS14 (101 aa).

The protein belongs to the universal ribosomal protein uS14 family. As to quaternary structure, part of the 30S ribosomal subunit. Contacts proteins S3 and S10.

Its function is as follows. Binds 16S rRNA, required for the assembly of 30S particles and may also be responsible for determining the conformation of the 16S rRNA at the A site. This is Small ribosomal subunit protein uS14 from Saccharophagus degradans (strain 2-40 / ATCC 43961 / DSM 17024).